The following is a 356-amino-acid chain: UDP-N-acetylglucosamine--N-acetylmuramyl-(pentapeptide) pyrophosphoryl-undecaprenol N-acetylglucosamine transferase (356 aa).

R166, S196, and Q290 together coordinate UDP-N-acetyl-alpha-D-glucosamine.

Belongs to the glycosyltransferase 28 family. MurG subfamily.

The protein localises to the cell membrane. It catalyses the reaction Mur2Ac(oyl-L-Ala-gamma-D-Glu-L-Lys-D-Ala-D-Ala)-di-trans,octa-cis-undecaprenyl diphosphate + UDP-N-acetyl-alpha-D-glucosamine = beta-D-GlcNAc-(1-&gt;4)-Mur2Ac(oyl-L-Ala-gamma-D-Glu-L-Lys-D-Ala-D-Ala)-di-trans,octa-cis-undecaprenyl diphosphate + UDP + H(+). The protein operates within cell wall biogenesis; peptidoglycan biosynthesis. Functionally, cell wall formation. Catalyzes the transfer of a GlcNAc subunit on undecaprenyl-pyrophosphoryl-MurNAc-pentapeptide (lipid intermediate I) to form undecaprenyl-pyrophosphoryl-MurNAc-(pentapeptide)GlcNAc (lipid intermediate II). This is UDP-N-acetylglucosamine--N-acetylmuramyl-(pentapeptide) pyrophosphoryl-undecaprenol N-acetylglucosamine transferase from Staphylococcus aureus (strain Mu3 / ATCC 700698).